A 76-amino-acid chain; its full sequence is Short coiled-coil protein B (76 aa).

A coiled-coil region spans residues 6–52 (ENQVELEEKTRLINQVLELQNTLEDLSARVDAVKEENLKLKSENQVL).

It belongs to the SCOC family.

Its subcellular location is the golgi apparatus membrane. The protein localises to the golgi apparatus. The protein resides in the trans-Golgi network. It is found in the cytoplasm. It localises to the cytosol. Functionally, positive regulator of amino acid starvation-induced autophagy. The polypeptide is Short coiled-coil protein B (scocb) (Danio rerio (Zebrafish)).